The sequence spans 341 residues: MATIKDVAKRANVSTTTVSHVINKTRFVAEETRNAVWAAIKELHYSPSAVARSLKVNHTKSIGLLATSSEAAYFAEIIEAVEKNCFQKGYTLILGNAWNNLEKQRAYLSMMAQKRVDGLLVMCSEYPEPLLAMLEEYRHIPMVVMDWGEAKADFTDAVIDNAFEGGYMAGRYLIERGHREIGVIPGPLERNTGAGRLAGFMKAMEEAMIKVPESWIVQGDFEPESGYRAMQQILSQSHRPTAVFCGGDIMAMGALCAADEMGLRVPQDVSLIGYDNVRNARYFTPALTTIHQPKDSLGETAFNMLLDRIVNKREEPQSIEVHPRLIERRSVADGPFRDYRR.

One can recognise an HTH lacI-type domain in the interval 2–56 (ATIKDVAKRANVSTTTVSHVINKTRFVAEETRNAVWAAIKELHYSPSAVARSLKV). The H-T-H motif DNA-binding region spans 4–23 (IKDVAKRANVSTTTVSHVIN). Residues 48 to 56 (SAVARSLKV) mediate DNA binding. Hypoxanthine-binding residues include Y73, R190, T192, F221, and D275.

Homodimer.

Its pathway is purine metabolism; purine nucleotide biosynthesis [regulation]. Is the main repressor of the genes involved in the de novo synthesis of purine nucleotides, regulating purB, purC, purEK, purF, purHD, purL, purMN and guaBA expression. PurR is allosterically activated to bind its cognate DNA by binding the purine corepressors, hypoxanthine or guanine, thereby effecting transcription repression. The protein is HTH-type transcriptional repressor PurR of Escherichia coli (strain UTI89 / UPEC).